Reading from the N-terminus, the 157-residue chain is Protein Smg homolog (157 aa).

Belongs to the Smg family.

This chain is Protein Smg homolog, found in Shewanella piezotolerans (strain WP3 / JCM 13877).